The chain runs to 132 residues: MSFEYRHYKREAKICTCRGGWAHVLLCIGVSQGACAEHLPHRPAVEKDVPGAGEVLFMCSWRIFPVASASPSSSISGLAGHSVFLVPGLAAHPGSHSDQPPGVPSRRKSRLERWSPSVSRSTSPPTEAPFCL.

The N-terminal stretch at Met-1 to Cys-35 is a signal peptide. The segment at Ala-91 to Leu-132 is disordered. A compositionally biased stretch (low complexity) spans Ser-115–Pro-125.

It localises to the secreted. This is an uncharacterized protein from Homo sapiens (Human).